We begin with the raw amino-acid sequence, 270 residues long: Glutamate racemase (270 aa).

Residues 7-8 (DS) and 39-40 (YG) each bind substrate. The Proton donor/acceptor role is filled by Cys-70. 71–72 (NT) contacts substrate. Cys-194 functions as the Proton donor/acceptor in the catalytic mechanism. 195–196 (TH) is a binding site for substrate.

It belongs to the aspartate/glutamate racemases family.

The enzyme catalyses L-glutamate = D-glutamate. It functions in the pathway cell wall biogenesis; peptidoglycan biosynthesis. Provides the (R)-glutamate required for cell wall biosynthesis. The polypeptide is Glutamate racemase (Paracoccus denitrificans (strain Pd 1222)).